A 72-amino-acid polypeptide reads, in one-letter code: DNA-directed RNA polymerase subunit omega (72 aa).

This sequence belongs to the RNA polymerase subunit omega family. The RNAP catalytic core consists of 2 alpha, 1 beta, 1 beta' and 1 omega subunit. When a sigma factor is associated with the core the holoenzyme is formed, which can initiate transcription.

The catalysed reaction is RNA(n) + a ribonucleoside 5'-triphosphate = RNA(n+1) + diphosphate. Promotes RNA polymerase assembly. Latches the N- and C-terminal regions of the beta' subunit thereby facilitating its interaction with the beta and alpha subunits. The polypeptide is DNA-directed RNA polymerase subunit omega (Clostridium beijerinckii (strain ATCC 51743 / NCIMB 8052) (Clostridium acetobutylicum)).